The chain runs to 201 residues: Ribonuclease HII (201 aa).

The 190-residue stretch at 12–201 (DLVAGVDEVG…VRELLDASVE (190 aa)) folds into the RNase H type-2 domain. Residues D18, E19, and D110 each contribute to the a divalent metal cation site.

The protein belongs to the RNase HII family. Mn(2+) is required as a cofactor. The cofactor is Mg(2+).

It is found in the cytoplasm. It carries out the reaction Endonucleolytic cleavage to 5'-phosphomonoester.. Functionally, endonuclease that specifically degrades the RNA of RNA-DNA hybrids. The sequence is that of Ribonuclease HII from Pseudomonas paraeruginosa (strain DSM 24068 / PA7) (Pseudomonas aeruginosa (strain PA7)).